Reading from the N-terminus, the 387-residue chain is Phosphoglycerate kinase (387 aa).

Residues 21 to 23, R36, 59 to 62, R113, and R146 contribute to the substrate site; these read DLN and HLGR. ATP-binding positions include K197, E314, and 340 to 343; that span reads GGDT.

This sequence belongs to the phosphoglycerate kinase family. As to quaternary structure, monomer.

The protein localises to the cytoplasm. It carries out the reaction (2R)-3-phosphoglycerate + ATP = (2R)-3-phospho-glyceroyl phosphate + ADP. It functions in the pathway carbohydrate degradation; glycolysis; pyruvate from D-glyceraldehyde 3-phosphate: step 2/5. The protein is Phosphoglycerate kinase of Pseudomonas syringae pv. syringae (strain B728a).